A 178-amino-acid polypeptide reads, in one-letter code: Large ribosomal subunit protein uL16 (178 aa).

Belongs to the universal ribosomal protein uL16 family.

In Pyrobaculum calidifontis (strain DSM 21063 / JCM 11548 / VA1), this protein is Large ribosomal subunit protein uL16.